The primary structure comprises 172 residues: Large ribosomal subunit protein uL10 (172 aa).

The protein belongs to the universal ribosomal protein uL10 family. Part of the ribosomal stalk of the 50S ribosomal subunit. The N-terminus interacts with L11 and the large rRNA to form the base of the stalk. The C-terminus forms an elongated spine to which L12 dimers bind in a sequential fashion forming a multimeric L10(L12)X complex.

Its function is as follows. Forms part of the ribosomal stalk, playing a central role in the interaction of the ribosome with GTP-bound translation factors. This chain is Large ribosomal subunit protein uL10, found in Bartonella henselae (strain ATCC 49882 / DSM 28221 / CCUG 30454 / Houston 1) (Rochalimaea henselae).